The sequence spans 463 residues: tRNA (guanine(10)-N(2))-methyltransferase TRMT11 (463 aa).

Alanine 2 carries the post-translational modification N-acetylalanine.

The protein belongs to the class I-like SAM-binding methyltransferase superfamily. TRM11 methyltransferase family. As to quaternary structure, part of the heterodimeric TRMT11-TRM112 methyltransferase complex; this complex forms an active tRNA methyltransferase, where TRMT112 acts as an activator of the catalytic subunit TRMT11.

It is found in the cytoplasm. The enzyme catalyses guanosine(10) in tRNA + S-adenosyl-L-methionine = N(2)-methylguanosine(10) in tRNA + S-adenosyl-L-homocysteine + H(+). In terms of biological role, catalytic subunit of the TRMT11-TRM112 methyltransferase complex, that specifically mediates the S-adenosyl-L-methionine-dependent N(2)-methylation of guanosine nucleotide at position 10 (m2G10) in tRNAs. This is one of the major tRNA (guanine-N(2))-methyltransferases. In Homo sapiens (Human), this protein is tRNA (guanine(10)-N(2))-methyltransferase TRMT11.